The primary structure comprises 1057 residues: Carbamoyl phosphate synthase large chain (1057 aa).

The carboxyphosphate synthetic domain stretch occupies residues 1–401 (MPKREDINKI…ATQKAIRSLD (401 aa)). Residues Arg-129, Arg-169, Gly-175, Gly-176, Gln-208, Ile-210, Glu-215, Gly-241, Ile-242, His-243, Gln-284, and Glu-298 each contribute to the ATP site. In terms of domain architecture, ATP-grasp 1 spans 133 to 327 (RALMNDLNEP…IAKVAAKIAV (195 aa)). Gln-284, Glu-298, and Asn-300 together coordinate Mg(2+). Mn(2+)-binding residues include Gln-284, Glu-298, and Asn-300. The interval 402–546 (IDINYIGDEE…YSTYELENES (145 aa)) is oligomerization domain. The segment at 547–929 (IVSNRKSIVV…ALYKAFEGAK (383 aa)) is carbamoyl phosphate synthetic domain. In terms of domain architecture, ATP-grasp 2 spans 671–861 (NKLIQANGIR…MARLATRAIL (191 aa)). Positions 707, 746, 748, 752, 777, 778, 779, 780, 820, and 832 each coordinate ATP. Mg(2+) is bound by residues Gln-820, Glu-832, and Asn-834. Residues Gln-820, Glu-832, and Asn-834 each contribute to the Mn(2+) site. One can recognise an MGS-like domain in the interval 930-1057 (MHMPDHGKVL…ESQAFTTLHL (128 aa)). The interval 930–1057 (MHMPDHGKVL…ESQAFTTLHL (128 aa)) is allosteric domain.

It belongs to the CarB family. Composed of two chains; the small (or glutamine) chain promotes the hydrolysis of glutamine to ammonia, which is used by the large (or ammonia) chain to synthesize carbamoyl phosphate. Tetramer of heterodimers (alpha,beta)4. Requires Mg(2+) as cofactor. Mn(2+) is required as a cofactor.

It carries out the reaction hydrogencarbonate + L-glutamine + 2 ATP + H2O = carbamoyl phosphate + L-glutamate + 2 ADP + phosphate + 2 H(+). The enzyme catalyses hydrogencarbonate + NH4(+) + 2 ATP = carbamoyl phosphate + 2 ADP + phosphate + 2 H(+). Its pathway is amino-acid biosynthesis; L-arginine biosynthesis; carbamoyl phosphate from bicarbonate: step 1/1. It participates in pyrimidine metabolism; UMP biosynthesis via de novo pathway; (S)-dihydroorotate from bicarbonate: step 1/3. In terms of biological role, large subunit of the glutamine-dependent carbamoyl phosphate synthetase (CPSase). CPSase catalyzes the formation of carbamoyl phosphate from the ammonia moiety of glutamine, carbonate, and phosphate donated by ATP, constituting the first step of 2 biosynthetic pathways, one leading to arginine and/or urea and the other to pyrimidine nucleotides. The large subunit (synthetase) binds the substrates ammonia (free or transferred from glutamine from the small subunit), hydrogencarbonate and ATP and carries out an ATP-coupled ligase reaction, activating hydrogencarbonate by forming carboxy phosphate which reacts with ammonia to form carbamoyl phosphate. This is Carbamoyl phosphate synthase large chain from Pediococcus pentosaceus (strain ATCC 25745 / CCUG 21536 / LMG 10740 / 183-1w).